The following is a 743-amino-acid chain: Cytosolic endo-beta-N-acetylglucosaminidase (743 aa).

Position 1 is an N-acetylmethionine (M1). The segment covering M1 to S11 has biased composition (low complexity). The interval M1–E55 is disordered. S66 carries the phosphoserine modification. The region spanning R291–W383 is the BRCT domain.

Belongs to the glycosyl hydrolase 85 family. As to expression, widely expressed. Expressed at higher level in thymus and spleen.

It is found in the cytoplasm. Its subcellular location is the cytosol. It catalyses the reaction an N(4)-(oligosaccharide-(1-&gt;3)-[oligosaccharide-(1-&gt;6)]-beta-D-Man-(1-&gt;4)-beta-D-GlcNAc-(1-&gt;4)-alpha-D-GlcNAc)-L-asparaginyl-[protein] + H2O = an oligosaccharide-(1-&gt;3)-[oligosaccharide-(1-&gt;6)]-beta-D-Man-(1-&gt;4)-D-GlcNAc + N(4)-(N-acetyl-beta-D-glucosaminyl)-L-asparaginyl-[protein]. In terms of biological role, endoglycosidase that releases N-glycans from glycoproteins by cleaving the beta-1,4-glycosidic bond in the N,N'-diacetylchitobiose core. Involved in the processing of free oligosaccharides in the cytosol. In Homo sapiens (Human), this protein is Cytosolic endo-beta-N-acetylglucosaminidase (ENGASE).